A 175-amino-acid polypeptide reads, in one-letter code: Bifunctional protein PyrR (175 aa).

Residues 40–41 (TR), R85, 102–110 (DDVLYTGRT), R135, and V159 each bind substrate. The PRPP-binding motif lies at 98-110 (VVIIDDVLYTGRT).

The protein belongs to the purine/pyrimidine phosphoribosyltransferase family. PyrR subfamily. Homodimer and homohexamer; in equilibrium.

The enzyme catalyses UMP + diphosphate = 5-phospho-alpha-D-ribose 1-diphosphate + uracil. Its function is as follows. Regulates transcriptional attenuation of the pyrimidine nucleotide (pyr) operon by binding in a uridine-dependent manner to specific sites on pyr mRNA. This disrupts an antiterminator hairpin in the RNA and favors formation of a downstream transcription terminator, leading to a reduced expression of downstream genes. Functionally, also displays a weak uracil phosphoribosyltransferase activity which is not physiologically significant. The chain is Bifunctional protein PyrR from Staphylococcus epidermidis (strain ATCC 35984 / DSM 28319 / BCRC 17069 / CCUG 31568 / BM 3577 / RP62A).